A 722-amino-acid chain; its full sequence is Polyribonucleotide nucleotidyltransferase (722 aa).

Residues Asp495 and Asp501 each coordinate Mg(2+). Positions 562–621 constitute a KH domain; that stretch reads PRLLSFRIDPELIGTVIGPGGRTIKGITERTNTKIDIEDGGIVTIASHDGVAAEEAQKII. The 69-residue stretch at 631-699 folds into the S1 motif domain; the sequence is GEIFTGSITR…NRGRINLTLR (69 aa). Over residues 701-711 the composition is skewed to polar residues; it reads VSQNNNDMNYP. The tract at residues 701–722 is disordered; it reads VSQNNNDMNYPQPTPTPVAPLN. Pro residues predominate over residues 712–722; the sequence is QPTPTPVAPLN.

The protein belongs to the polyribonucleotide nucleotidyltransferase family. It depends on Mg(2+) as a cofactor.

It localises to the cytoplasm. The catalysed reaction is RNA(n+1) + phosphate = RNA(n) + a ribonucleoside 5'-diphosphate. Its function is as follows. Involved in mRNA degradation. Catalyzes the phosphorolysis of single-stranded polyribonucleotides processively in the 3'- to 5'-direction. The sequence is that of Polyribonucleotide nucleotidyltransferase from Prochlorococcus marinus (strain MIT 9211).